An 86-amino-acid polypeptide reads, in one-letter code: Putative membrane protein insertion efficiency factor (86 aa).

The interval 66 to 86 (PLHEGGDDPVPPRKNDDNREN) is disordered.

It belongs to the UPF0161 family.

It localises to the cell inner membrane. In terms of biological role, could be involved in insertion of integral membrane proteins into the membrane. In Proteus mirabilis (strain HI4320), this protein is Putative membrane protein insertion efficiency factor.